The sequence spans 236 residues: Phycocyanobilin:ferredoxin oxidoreductase (236 aa).

This sequence belongs to the HY2 family.

The catalysed reaction is (2R,3Z)-phycocyanobilin + 4 oxidized [2Fe-2S]-[ferredoxin] = biliverdin IXalpha + 4 reduced [2Fe-2S]-[ferredoxin] + 4 H(+). Functionally, catalyzes the four-electron reduction of biliverdin IX-alpha (2-electron reduction at both the A and D rings); the reaction proceeds via an isolatable 2-electron intermediate, 181,182-dihydrobiliverdin. The chain is Phycocyanobilin:ferredoxin oxidoreductase (pcyA) from Thermosynechococcus vestitus (strain NIES-2133 / IAM M-273 / BP-1).